Consider the following 70-residue polypeptide: DNA-directed RNA polymerase subunit epsilon (70 aa).

It belongs to the RNA polymerase subunit epsilon family. RNAP is composed of a core of 2 alpha, a beta and a beta' subunit. The core is associated with a delta subunit, and at least one of epsilon or omega. When a sigma factor is associated with the core the holoenzyme is formed, which can initiate transcription.

It carries out the reaction RNA(n) + a ribonucleoside 5'-triphosphate = RNA(n+1) + diphosphate. Functionally, a non-essential component of RNA polymerase (RNAP). The chain is DNA-directed RNA polymerase subunit epsilon from Bacillus cereus (strain Q1).